The chain runs to 389 residues: Succinate--CoA ligase [ADP-forming] subunit beta (389 aa).

The region spanning 9–236 is the ATP-grasp domain; the sequence is KELFAKHNVP…KDATDPLELK (228 aa). ATP is bound by residues Lys-45, 52 to 54, Ser-94, and Glu-99; that span reads GRG. Mg(2+) is bound by residues Asn-191 and Asp-205. Substrate contacts are provided by residues Asn-256 and 318-320; that span reads GIT.

This sequence belongs to the succinate/malate CoA ligase beta subunit family. As to quaternary structure, heterotetramer of two alpha and two beta subunits. It depends on Mg(2+) as a cofactor.

The enzyme catalyses succinate + ATP + CoA = succinyl-CoA + ADP + phosphate. It carries out the reaction GTP + succinate + CoA = succinyl-CoA + GDP + phosphate. It functions in the pathway carbohydrate metabolism; tricarboxylic acid cycle; succinate from succinyl-CoA (ligase route): step 1/1. Its function is as follows. Succinyl-CoA synthetase functions in the citric acid cycle (TCA), coupling the hydrolysis of succinyl-CoA to the synthesis of either ATP or GTP and thus represents the only step of substrate-level phosphorylation in the TCA. The beta subunit provides nucleotide specificity of the enzyme and binds the substrate succinate, while the binding sites for coenzyme A and phosphate are found in the alpha subunit. In Mycobacteroides abscessus (strain ATCC 19977 / DSM 44196 / CCUG 20993 / CIP 104536 / JCM 13569 / NCTC 13031 / TMC 1543 / L948) (Mycobacterium abscessus), this protein is Succinate--CoA ligase [ADP-forming] subunit beta.